The following is a 299-amino-acid chain: Mycothiol acetyltransferase (299 aa).

2 N-acetyltransferase domains span residues 1–156 and 149–299; these read MGWT…TYRG and VTMR…ARAL. E33 lines the 1D-myo-inositol 2-(L-cysteinylamino)-2-deoxy-alpha-D-glucopyranoside pocket. Acetyl-CoA is bound by residues 75–77 and 83–88; these read LVV and RRGIGT. 1D-myo-inositol 2-(L-cysteinylamino)-2-deoxy-alpha-D-glucopyranoside is bound by residues E176, K218, and E231. Acetyl-CoA-binding positions include 235–237 and 242–248; these read VGI and QGRGLGR. Residue Y269 coordinates 1D-myo-inositol 2-(L-cysteinylamino)-2-deoxy-alpha-D-glucopyranoside. 274–279 lines the acetyl-CoA pocket; that stretch reads NTAALH.

This sequence belongs to the acetyltransferase family. MshD subfamily. In terms of assembly, monomer.

The enzyme catalyses 1D-myo-inositol 2-(L-cysteinylamino)-2-deoxy-alpha-D-glucopyranoside + acetyl-CoA = mycothiol + CoA + H(+). Its function is as follows. Catalyzes the transfer of acetyl from acetyl-CoA to desacetylmycothiol (Cys-GlcN-Ins) to form mycothiol. The sequence is that of Mycothiol acetyltransferase from Rhodococcus erythropolis (strain PR4 / NBRC 100887).